We begin with the raw amino-acid sequence, 219 residues long: Probable GTP-binding protein EngB (219 aa).

Residues 24 to 207 (VQPEIAFAGR…HELIESWLRP (184 aa)) enclose the EngB-type G domain. GTP is bound by residues 32 to 39 (GRSNAGKS), 59 to 63 (GRTQH), 81 to 84 (DLPG), 148 to 151 (TKCD), and 186 to 188 (FSA). Ser39 and Thr61 together coordinate Mg(2+).

It belongs to the TRAFAC class TrmE-Era-EngA-EngB-Septin-like GTPase superfamily. EngB GTPase family. Mg(2+) is required as a cofactor.

Functionally, necessary for normal cell division and for the maintenance of normal septation. The chain is Probable GTP-binding protein EngB from Burkholderia ambifaria (strain ATCC BAA-244 / DSM 16087 / CCUG 44356 / LMG 19182 / AMMD) (Burkholderia cepacia (strain AMMD)).